The chain runs to 461 residues: Ubiquinone hydroxylase UbiM (461 aa).

Belongs to the UbiH/COQ6 family. The cofactor is FAD.

The catalysed reaction is a 2-(all-trans-polyprenyl)phenol + NADPH + O2 + H(+) = a 3-(all-trans-polyprenyl)benzene-1,2-diol + NADP(+) + H2O. The enzyme catalyses a 5-methoxy-2-methyl-3-(all-trans-polyprenyl)benzene-1,4-diol + AH2 + O2 = a 3-demethylubiquinol + A + H2O. It participates in cofactor biosynthesis; ubiquinone biosynthesis. In terms of biological role, catalyzes the hydroxylation of three positions of the aromatic ring during ubiquinone biosynthesis. In Neisseria meningitidis serogroup C / serotype 2a (strain ATCC 700532 / DSM 15464 / FAM18), this protein is Ubiquinone hydroxylase UbiM.